A 311-amino-acid chain; its full sequence is Meteorin-like protein (311 aa).

The span at 1–13 (MRGAARAAWGRAG) shows a compositional bias: low complexity. The tract at residues 1 to 24 (MRGAARAAWGRAGQPWPRPPAPGP) is disordered. Positions 1–45 (MRGAARAAWGRAGQPWPRPPAPGPPPPPLPLLLLLLAGLLGGAGA) are cleaved as a signal peptide. Disulfide bonds link Cys-52-Cys-75, Cys-107-Cys-143, Cys-188-Cys-260, Cys-191-Cys-284, and Cys-201-Cys-306.

It belongs to the meteorin family. In terms of tissue distribution, highly expressed in the skeletal muscle, in subcutaneous adipose tissue, epididymal white adipose tissue depots and heart. Also expressed in brown adipose tissues and kidney.

The protein localises to the secreted. Its function is as follows. Hormone induced following exercise or cold exposure that promotes energy expenditure. Induced either in the skeletal muscle after exercise or in adipose tissue following cold exposure and is present in the circulation. Able to stimulate energy expenditure associated with the browning of the white fat depots and improves glucose tolerance. Does not promote an increase in a thermogenic gene program via direct action on adipocytes, but acts by stimulating several immune cell subtypes to enter the adipose tissue and activate their prothermogenic actions. Stimulates an eosinophil-dependent increase in IL4 expression and promotes alternative activation of adipose tissue macrophages, which are required for the increased expression of the thermogenic and anti-inflammatory gene programs in fat. Required for some cold-induced thermogenic responses, suggesting a role in metabolic adaptations to cold temperatures. The protein is Meteorin-like protein (METRNL) of Homo sapiens (Human).